Here is a 392-residue protein sequence, read N- to C-terminus: MAASEQPQAGELLAKARRAFLEEFGAEPELAVSAPGRVNLIGEHTDYNRGLVLPMALELVTVLVGSPRVDGLVSLLTTSEDADEPRRLQFPLPTSQRPLEPGTPHWANYVKGVIQHYPAAPLPGFSAVVVSSVPLGGGLSSSASLEVATYTFLQQLCPDSGTIAARAQVCQRAEHSFAGVPCGIMDQLIALLGQRGHALLIDCRSLETSLVPLSDPKLAVLITNSNVRHSLGSSEYPLRRRQCEEVARALGKESLREVQLEELEAGRDLMSTEAFRRARHVVGEIQRTAQAAAALRRGDYRAFGRLMVESHHSLRDDYEVSCPELDQLVEAALSAPGVYGSRMTGGGFGGCTVTLLEASAAPRVMQHIQEQYHGTATFYLSQAADGAKVLHF.

Alpha-D-galactose contacts are provided by Arg-37, Glu-43, His-44, and Asp-46. 4 residues coordinate ATP: Gly-136, Gly-138, Ser-140, and Ser-141. An alpha-D-galactose-binding site is contributed by Asp-186. The active-site Proton acceptor is Asp-186. Position 230 is a phosphoserine (Ser-230). Residue Tyr-236 coordinates alpha-D-galactose.

This sequence belongs to the GHMP kinase family. GalK subfamily. In terms of assembly, homodimer.

The catalysed reaction is alpha-D-galactose + ATP = alpha-D-galactose 1-phosphate + ADP + H(+). It participates in carbohydrate metabolism; galactose metabolism. Catalyzes the transfer of a phosphate from ATP to alpha-D-galactose and participates in the first committed step in the catabolism of galactose. This Bos taurus (Bovine) protein is Galactokinase (GALK1).